A 287-amino-acid polypeptide reads, in one-letter code: Elongation factor Ts (287 aa).

Residues 80–83 form an involved in Mg(2+) ion dislocation from EF-Tu region; sequence TDFL.

It belongs to the EF-Ts family.

Its subcellular location is the cytoplasm. Associates with the EF-Tu.GDP complex and induces the exchange of GDP to GTP. It remains bound to the aminoacyl-tRNA.EF-Tu.GTP complex up to the GTP hydrolysis stage on the ribosome. This Pseudomonas savastanoi pv. phaseolicola (strain 1448A / Race 6) (Pseudomonas syringae pv. phaseolicola (strain 1448A / Race 6)) protein is Elongation factor Ts.